Reading from the N-terminus, the 342-residue chain is N-acetyl-gamma-glutamyl-phosphate reductase (342 aa).

C149 is a catalytic residue.

It belongs to the NAGSA dehydrogenase family. Type 1 subfamily.

The protein resides in the cytoplasm. The enzyme catalyses N-acetyl-L-glutamate 5-semialdehyde + phosphate + NADP(+) = N-acetyl-L-glutamyl 5-phosphate + NADPH + H(+). Its pathway is amino-acid biosynthesis; L-arginine biosynthesis; N(2)-acetyl-L-ornithine from L-glutamate: step 3/4. In terms of biological role, catalyzes the NADPH-dependent reduction of N-acetyl-5-glutamyl phosphate to yield N-acetyl-L-glutamate 5-semialdehyde. The protein is N-acetyl-gamma-glutamyl-phosphate reductase of Nitrosomonas europaea (strain ATCC 19718 / CIP 103999 / KCTC 2705 / NBRC 14298).